Consider the following 304-residue polypeptide: Aquaglyceroporin-3 (304 aa).

Residues 1-68 (MQSQPDNVAY…LRLNYRDYMG (68 aa)) lie on the Cytoplasmic side of the membrane. Residues 69-89 (ELLGTFVLLFMGNGVVATVII) traverse the membrane as a helical segment. Topologically, residues 90–95 (DGKLGF) are extracellular. Residues 96 to 116 (LSITLGWGIAVTMALYVSLGI) form a helical membrane-spanning segment. The Cytoplasmic portion of the chain corresponds to 117-142 (SSGHLNPAVTVGNAVFGDFPWRKVPG). The helical transmembrane segment at 143–163 (YIAAQMLGAFLGAACAYGVFA) threads the bilayer. The Extracellular portion of the chain corresponds to 164-196 (DLLKAHGGGELIAFGEKGTAGVFSTYPRDSNGL). Residues 197 to 217 (FSCIFGEFICTAMLLFCVCGI) traverse the membrane as a helical segment. At 218-231 (FDPNNSPAKGHEPL) the chain is on the cytoplasmic side. Residues 232-252 (AVGALVFAIGNNIGYSTGYAI) form a helical membrane-spanning segment. Residues 253–277 (NPARDFGPRVFSSFLYGGEVFSHAN) lie on the Extracellular side of the membrane. A helical transmembrane segment spans residues 278–298 (YYFWVPLVIPLFGGIFGLFLY). Residues 299-304 (KYFVPH) are Cytoplasmic-facing.

Belongs to the MIP/aquaporin (TC 1.A.8) family.

The protein localises to the cell membrane. The catalysed reaction is glycerol(in) = glycerol(out). It catalyses the reaction H2O(in) = H2O(out). It carries out the reaction urea(in) = urea(out). Mediates water and glycerol transport across the cell membrane. Permeable to urea. Permeable to methylamine/methylammonium. Permeable to dihydroxyacetone. Permeable to erythritol and ribitol. The polypeptide is Aquaglyceroporin-3 (Trypanosoma brucei brucei).